A 500-amino-acid chain; its full sequence is Lysine--tRNA ligase (500 aa).

Residues Glu410 and Glu417 each contribute to the Mg(2+) site.

This sequence belongs to the class-II aminoacyl-tRNA synthetase family. In terms of assembly, homodimer. Mg(2+) is required as a cofactor.

It is found in the cytoplasm. It carries out the reaction tRNA(Lys) + L-lysine + ATP = L-lysyl-tRNA(Lys) + AMP + diphosphate. The polypeptide is Lysine--tRNA ligase (Pseudomonas syringae pv. syringae (strain B728a)).